A 197-amino-acid chain; its full sequence is Dephospho-CoA kinase (197 aa).

Residues 3–197 (ILGLTGSIAM…TGCLVGQGSR (195 aa)) enclose the DPCK domain. An ATP-binding site is contributed by 11–16 (AMGKST).

Belongs to the CoaE family.

The protein localises to the cytoplasm. The catalysed reaction is 3'-dephospho-CoA + ATP = ADP + CoA + H(+). Its pathway is cofactor biosynthesis; coenzyme A biosynthesis; CoA from (R)-pantothenate: step 5/5. Functionally, catalyzes the phosphorylation of the 3'-hydroxyl group of dephosphocoenzyme A to form coenzyme A. The polypeptide is Dephospho-CoA kinase (Zymomonas mobilis subsp. mobilis (strain ATCC 31821 / ZM4 / CP4)).